A 598-amino-acid chain; its full sequence is Probable ATP-dependent RNA helicase DDX52 (598 aa).

Lys-15 is modified (N6-acetyllysine). Ser-39 carries the phosphoserine modification. Positions 59–98 are disordered; that stretch reads CGGLQTQQELQNEETTEGGLLERSKEPKKKKRKKMTADVP. The Q motif signature appears at 166-194; sequence QLDQEYKISPRLLQNILDAGFQVPTPIQM. The Helicase ATP-binding domain maps to 197-375; it reads IPVMLHGREL…KLNLDNIVSV (179 aa). 210 to 217 serves as a coordination point for ATP; the sequence is APTGSGKT. The DEAD box signature appears at 319–322; it reads DESD. In terms of domain architecture, Helicase C-terminal spans 386 to 547; sequence TVEQELLFVG…PVPEYIKGFQ (162 aa). Positions 578 to 598 are disordered; it reads AKQKKVAGQNSKKKETLKGKS. Residues 589 to 598 are compositionally biased toward basic and acidic residues; it reads KKKETLKGKS.

The protein belongs to the DEAD box helicase family. DDX52/ROK1 subfamily.

It is found in the nucleus. The protein localises to the nucleolus. It catalyses the reaction ATP + H2O = ADP + phosphate + H(+). Functionally, required for efficient ribosome biogenesis. May control cell cycle progression by regulating translation of mRNAs that contain a terminal oligo pyrimidine (TOP) motif in their 5' UTRs, such as GTPBP4. This is Probable ATP-dependent RNA helicase DDX52 (Ddx52) from Rattus norvegicus (Rat).